Consider the following 382-residue polypeptide: Lipid-A-disaccharide synthase (382 aa).

The protein belongs to the LpxB family.

It carries out the reaction 2-N,3-O-bis[(3R)-3-hydroxytetradecanoyl]-alpha-D-glucosaminyl 1-phosphate + UDP-2-N,3-O-bis[(3R)-3-hydroxytetradecanoyl]-alpha-D-glucosamine = lipid A disaccharide (E. coli) + UDP + H(+). It catalyses the reaction a lipid X + a UDP-2-N,3-O-bis[(3R)-3-hydroxyacyl]-alpha-D-glucosamine = a lipid A disaccharide + UDP + H(+). The protein operates within glycolipid biosynthesis; lipid IV(A) biosynthesis; lipid IV(A) from (3R)-3-hydroxytetradecanoyl-[acyl-carrier-protein] and UDP-N-acetyl-alpha-D-glucosamine: step 5/6. Functionally, condensation of UDP-2,3-diacylglucosamine and 2,3-diacylglucosamine-1-phosphate to form lipid A disaccharide, a precursor of lipid A, a phosphorylated glycolipid that anchors the lipopolysaccharide to the outer membrane of the cell. This Escherichia coli O127:H6 (strain E2348/69 / EPEC) protein is Lipid-A-disaccharide synthase.